We begin with the raw amino-acid sequence, 152 residues long: Protein FYV5 (152 aa).

5 helical membrane-spanning segments follow: residues 26–46, 56–76, 82–102, 106–126, and 127–147; these read IISICFSMLSFVFDFSVRICS, LISSSAFKVVSAFSLAGSCVL, VGIIVSLLLFNFSTCNFVLFL, LIDLFFCTFLPTPTFLPTPFF, and FMLHLPIFSLLNALELLYLII.

Its subcellular location is the cell membrane. It is found in the secreted. The protein resides in the cell wall. Its function is as follows. Involved in maintaining an adequate ionic strength homeostasis of the cellular aqueous environment, necessary for normal growth rate. Required for survival upon exposure to K1 killer toxin and hence plays a role in cell wall glucan synthesis. Required for dithiothreitol (DTT) resistance. Involved in cell cycle progression. The sequence is that of Protein FYV5 (FYV5) from Saccharomyces cerevisiae (strain ATCC 204508 / S288c) (Baker's yeast).